We begin with the raw amino-acid sequence, 341 residues long: Anthranilate phosphoribosyltransferase (341 aa).

5-phospho-alpha-D-ribose 1-diphosphate-binding positions include G81, 84-85 (GD), T89, 91-94 (NIST), 109-117 (KHGSRSVSG), and S121. G81 contributes to the anthranilate binding site. S93 contributes to the Mg(2+) binding site. Residue R167 coordinates anthranilate. The Mg(2+) site is built by D226 and E227.

This sequence belongs to the anthranilate phosphoribosyltransferase family. As to quaternary structure, homodimer. Mg(2+) serves as cofactor.

The enzyme catalyses N-(5-phospho-beta-D-ribosyl)anthranilate + diphosphate = 5-phospho-alpha-D-ribose 1-diphosphate + anthranilate. The protein operates within amino-acid biosynthesis; L-tryptophan biosynthesis; L-tryptophan from chorismate: step 2/5. Catalyzes the transfer of the phosphoribosyl group of 5-phosphorylribose-1-pyrophosphate (PRPP) to anthranilate to yield N-(5'-phosphoribosyl)-anthranilate (PRA). The chain is Anthranilate phosphoribosyltransferase from Methylococcus capsulatus (strain ATCC 33009 / NCIMB 11132 / Bath).